The following is a 206-amino-acid chain: Small ribosomal subunit protein uS4A (206 aa).

The S4 RNA-binding domain maps to 98–164 (LRLDNVAYKL…EKFKTFAENP (67 aa)).

The protein belongs to the universal ribosomal protein uS4 family. As to quaternary structure, part of the 30S ribosomal subunit. Contacts protein S5. The interaction surface between S4 and S5 is involved in control of translational fidelity.

Functionally, one of the primary rRNA binding proteins, it binds directly to 16S rRNA where it nucleates assembly of the body of the 30S subunit. With S5 and S12 plays an important role in translational accuracy. The polypeptide is Small ribosomal subunit protein uS4A (rspD1) (Clostridium acetobutylicum (strain ATCC 824 / DSM 792 / JCM 1419 / IAM 19013 / LMG 5710 / NBRC 13948 / NRRL B-527 / VKM B-1787 / 2291 / W)).